Reading from the N-terminus, the 312-residue chain is Malate dehydrogenase (312 aa).

NAD(+) is bound by residues 7–13 (GAAGGIG) and aspartate 34. Residues arginine 81 and arginine 87 each coordinate substrate. NAD(+) is bound by residues asparagine 94 and 117 to 119 (ITN). Positions 119 and 153 each coordinate substrate. The active-site Proton acceptor is the histidine 177. Methionine 227 contributes to the NAD(+) binding site.

This sequence belongs to the LDH/MDH superfamily. MDH type 1 family. Homodimer.

The enzyme catalyses (S)-malate + NAD(+) = oxaloacetate + NADH + H(+). Its function is as follows. Catalyzes the reversible oxidation of malate to oxaloacetate. The protein is Malate dehydrogenase of Escherichia coli O6:K15:H31 (strain 536 / UPEC).